The following is a 166-amino-acid chain: Glutamyl-tRNA(Gln) amidotransferase subunit C, mitochondrial (166 aa).

A mitochondrion-targeting transit peptide spans 1–44; sequence MIRGWTIFTLCKPSALVGSSHFNKQFNWAKSQLQFATKVPQQPY.

This sequence belongs to the GatC family. As to quaternary structure, subunit of the heterotrimeric GatCAB amidotransferase (AdT) complex, composed of A, B and C subunits.

The protein localises to the mitochondrion. The enzyme catalyses L-glutamyl-tRNA(Gln) + L-glutamine + ATP + H2O = L-glutaminyl-tRNA(Gln) + L-glutamate + ADP + phosphate + H(+). In terms of biological role, allows the formation of correctly charged Gln-tRNA(Gln) through the transamidation of misacylated Glu-tRNA(Gln) in the mitochondria. The reaction takes place in the presence of glutamine and ATP through an activated gamma-phospho-Glu-tRNA(Gln). In Anopheles darlingi (Mosquito), this protein is Glutamyl-tRNA(Gln) amidotransferase subunit C, mitochondrial.